Reading from the N-terminus, the 89-residue chain is U1-hexatoxin-Iw1e (89 aa).

The N-terminal stretch at 1-18 (MLKFVVLIFVVIMASTFA) is a signal peptide. Disulfide bonds link Cys-21/Cys-32, Cys-26/Cys-40, Cys-31/Cys-66, Cys-50/Cys-74, and Cys-68/Cys-81. Positions 87-89 (RSE) are excised as a propeptide.

Belongs to the MIT-like AcTx family. In terms of tissue distribution, expressed by the venom gland.

The protein localises to the secreted. The protein is U1-hexatoxin-Iw1e of Illawarra wisharti (Illawarra funnel-web spider).